A 344-amino-acid polypeptide reads, in one-letter code: N-acetyl-gamma-glutamyl-phosphate reductase (344 aa).

C150 is a catalytic residue.

The protein belongs to the NAGSA dehydrogenase family. Type 1 subfamily.

The protein resides in the cytoplasm. It carries out the reaction N-acetyl-L-glutamate 5-semialdehyde + phosphate + NADP(+) = N-acetyl-L-glutamyl 5-phosphate + NADPH + H(+). The protein operates within amino-acid biosynthesis; L-arginine biosynthesis; N(2)-acetyl-L-ornithine from L-glutamate: step 3/4. Catalyzes the NADPH-dependent reduction of N-acetyl-5-glutamyl phosphate to yield N-acetyl-L-glutamate 5-semialdehyde. The protein is N-acetyl-gamma-glutamyl-phosphate reductase of Pseudomonas fluorescens (strain Pf0-1).